The chain runs to 404 residues: Argininosuccinate synthase (404 aa).

An ATP-binding site is contributed by 7–15 (AYSGGLDTS). Y85 and S90 together coordinate L-citrulline. An ATP-binding site is contributed by G115. The L-aspartate site is built by T117, N121, and D122. Residue N121 coordinates L-citrulline. Positions 125, 178, 187, 264, and 276 each coordinate L-citrulline.

Belongs to the argininosuccinate synthase family. Type 1 subfamily. Homotetramer.

The protein localises to the cytoplasm. The catalysed reaction is L-citrulline + L-aspartate + ATP = 2-(N(omega)-L-arginino)succinate + AMP + diphosphate + H(+). The protein operates within amino-acid biosynthesis; L-arginine biosynthesis; L-arginine from L-ornithine and carbamoyl phosphate: step 2/3. This is Argininosuccinate synthase from Rhodopirellula baltica (strain DSM 10527 / NCIMB 13988 / SH1).